Here is a 248-residue protein sequence, read N- to C-terminus: uncharacterized protein (248 aa).

This is an uncharacterized protein from Streptococcus pyogenes serotype M6 (strain ATCC BAA-946 / MGAS10394).